Consider the following 410-residue polypeptide: WD repeat-containing protein jip5 (410 aa).

WD repeat units follow at residues 9-48 (PLSA…EEEH), 74-113 (RHKG…VENK), 119-160 (AKDG…SKVA), 223-264 (VSST…DQDE), 273-316 (GGGE…VVSE), and 320-357 (DETE…IGGE). A disordered region spans residues 41 to 65 (PTEEEEEHSDDEQASVSSSRNGKGH). Positions 43–53 (EEEEEHSDDEQ) are enriched in acidic residues. A disordered region spans residues 354–410 (IGGEKRGFGGDSDDSDDDSDDSDHEPKQGDDSRRKRKKQKGKDRGKGPEIMAFADLD). A compositionally biased stretch (acidic residues) spans 364–376 (DSDDSDDDSDDSD). Positions 377–386 (HEPKQGDDSR) are enriched in basic and acidic residues.

It belongs to the WD repeat WDR55 family.

The protein resides in the nucleus. Its subcellular location is the nucleolus. This Emericella nidulans (strain FGSC A4 / ATCC 38163 / CBS 112.46 / NRRL 194 / M139) (Aspergillus nidulans) protein is WD repeat-containing protein jip5 (jip5).